The sequence spans 306 residues: D-alanine--D-alanine ligase (306 aa).

Active-site residues include Glu-18 and Ser-150. One can recognise an ATP-grasp domain in the interval 104 to 303; it reads KMLWKAFGLP…FEQLVVKILE (200 aa). 134-189 lines the ATP pocket; sequence VAKLGLPLMVKPSLEGSSVGLTKVKAVEELKSAVEYALKFDNTILIEEWLAGDELT. Mg(2+)-binding residues include Asp-257, Glu-270, and Asn-272. Ser-281 is a catalytic residue.

This sequence belongs to the D-alanine--D-alanine ligase family. It depends on Mg(2+) as a cofactor. Requires Mn(2+) as cofactor.

The protein localises to the cytoplasm. It catalyses the reaction 2 D-alanine + ATP = D-alanyl-D-alanine + ADP + phosphate + H(+). It participates in cell wall biogenesis; peptidoglycan biosynthesis. Functionally, cell wall formation. This chain is D-alanine--D-alanine ligase, found in Haemophilus influenzae (strain ATCC 51907 / DSM 11121 / KW20 / Rd).